Consider the following 168-residue polypeptide: Phosphopantetheine adenylyltransferase (168 aa).

A substrate-binding site is contributed by threonine 13. ATP contacts are provided by residues 13–14 (TF) and histidine 21. Substrate is bound by residues lysine 45, leucine 78, and arginine 92. Residues 93–95 (GLR), glutamate 103, and 128–134 (TQFISSG) contribute to the ATP site.

Belongs to the bacterial CoaD family. As to quaternary structure, homohexamer. Mg(2+) is required as a cofactor.

The protein localises to the cytoplasm. The enzyme catalyses (R)-4'-phosphopantetheine + ATP + H(+) = 3'-dephospho-CoA + diphosphate. Its pathway is cofactor biosynthesis; coenzyme A biosynthesis; CoA from (R)-pantothenate: step 4/5. In terms of biological role, reversibly transfers an adenylyl group from ATP to 4'-phosphopantetheine, yielding dephospho-CoA (dPCoA) and pyrophosphate. This Wolbachia sp. subsp. Drosophila simulans (strain wRi) protein is Phosphopantetheine adenylyltransferase.